A 300-amino-acid polypeptide reads, in one-letter code: GTPase Era (300 aa).

An Era-type G domain is found at Y7–E175. Residues G15–S22 are G1. Position 15-22 (G15–S22) interacts with GTP. Positions Q41 to H45 are G2. The G3 stretch occupies residues D62–G65. Residues D62–L66 and N124–D127 contribute to the GTP site. The interval N124 to D127 is G4. A G5 region spans residues I154–A156. The KH type-2 domain occupies M206 to A283.

The protein belongs to the TRAFAC class TrmE-Era-EngA-EngB-Septin-like GTPase superfamily. Era GTPase family. In terms of assembly, monomer.

It localises to the cytoplasm. The protein resides in the cell inner membrane. Its function is as follows. An essential GTPase that binds both GDP and GTP, with rapid nucleotide exchange. Plays a role in 16S rRNA processing and 30S ribosomal subunit biogenesis and possibly also in cell cycle regulation and energy metabolism. In Glaesserella parasuis serovar 5 (strain SH0165) (Haemophilus parasuis), this protein is GTPase Era.